The following is a 112-amino-acid chain: Lutropin subunit beta (112 aa).

6 disulfides stabilise this stretch: Cys4/Cys52, Cys18/Cys67, Cys21/Cys105, Cys29/Cys83, Cys33/Cys85, and Cys88/Cys95. Asn8 carries N-linked (GlcNAc...) asparagine glycosylation.

It belongs to the glycoprotein hormones subunit beta family. As to quaternary structure, heterodimer of a common alpha chain and a unique beta chain which confers biological specificity to thyrotropin, lutropin, follitropin and gonadotropin.

The protein resides in the secreted. The protein is Lutropin subunit beta (lhb) of Aquarana catesbeiana (American bullfrog).